Reading from the N-terminus, the 328-residue chain is Cytochrome c biogenesis protein CcsA (328 aa).

Transmembrane regions (helical) follow at residues 13–33 (ISFS…LVNL), 46–66 (GIVI…IYSG), 73–93 (LYES…VSYF), 101–121 (LNAI…SGLL), 146–166 (MILG…LLVI), 234–254 (IISL…VWAN), 263–283 (WDPK…YLHI), and 295–315 (AIVA…VNLL).

It belongs to the CcmF/CycK/Ccl1/NrfE/CcsA family. In terms of assembly, may interact with Ccs1.

The protein localises to the plastid. It is found in the chloroplast thylakoid membrane. Its function is as follows. Required during biogenesis of c-type cytochromes (cytochrome c6 and cytochrome f) at the step of heme attachment. The chain is Cytochrome c biogenesis protein CcsA from Barbarea verna (Land cress).